The following is a 99-amino-acid chain: Aspartyl/glutamyl-tRNA(Asn/Gln) amidotransferase subunit C (99 aa).

The protein belongs to the GatC family. Heterotrimer of A, B and C subunits.

It catalyses the reaction L-glutamyl-tRNA(Gln) + L-glutamine + ATP + H2O = L-glutaminyl-tRNA(Gln) + L-glutamate + ADP + phosphate + H(+). The catalysed reaction is L-aspartyl-tRNA(Asn) + L-glutamine + ATP + H2O = L-asparaginyl-tRNA(Asn) + L-glutamate + ADP + phosphate + 2 H(+). Functionally, allows the formation of correctly charged Asn-tRNA(Asn) or Gln-tRNA(Gln) through the transamidation of misacylated Asp-tRNA(Asn) or Glu-tRNA(Gln) in organisms which lack either or both of asparaginyl-tRNA or glutaminyl-tRNA synthetases. The reaction takes place in the presence of glutamine and ATP through an activated phospho-Asp-tRNA(Asn) or phospho-Glu-tRNA(Gln). In Burkholderia cenocepacia (strain ATCC BAA-245 / DSM 16553 / LMG 16656 / NCTC 13227 / J2315 / CF5610) (Burkholderia cepacia (strain J2315)), this protein is Aspartyl/glutamyl-tRNA(Asn/Gln) amidotransferase subunit C.